Reading from the N-terminus, the 572-residue chain is Glutathione hydrolase 5 proenzyme (572 aa).

Topologically, residues 1-6 (MAWGHR) are cytoplasmic. The helical; Signal-anchor for type II membrane protein transmembrane segment at 7–29 (TTVCLVLLGVSLGLAIIVLAVVL) threads the bilayer. Over 30-572 (PHHQASCRPD…LRKAGKASGY (543 aa)) the chain is Extracellular. The N-linked (GlcNAc...) asparagine glycan is linked to Asn-98. Arg-110 provides a ligand contact to L-glutamate. Asn-185, Asn-194, Asn-204, Asn-277, Asn-303, Asn-347, and Asn-377 each carry an N-linked (GlcNAc...) asparagine glycan. Thr-388 serves as the catalytic Nucleophile. L-glutamate is bound by residues Thr-406, Glu-427, and 453-454 (SS).

The protein belongs to the gamma-glutamyltransferase family. In terms of assembly, heterodimer composed of the light and heavy chains. The active site is located in the light chain. Cleaved by autocatalysis into a large and a small subunit. Post-translationally, glycosylated. In terms of tissue distribution, widely expressed, but at low level, except in the airway epithelial cells. Detected in brain, heart, kidney, liver, lung, spleen, testis and trachea.

It localises to the membrane. It carries out the reaction glutathione + H2O = L-cysteinylglycine + L-glutamate. The enzyme catalyses an S-substituted glutathione + H2O = an S-substituted L-cysteinylglycine + L-glutamate. The catalysed reaction is leukotriene C4 + H2O = leukotriene D4 + L-glutamate. It catalyses the reaction S-[(2E,6E,10E)-geranylgeranyl]-L-glutathione + H2O = S-[(2E,6E,10E)-geranylgeranyl]-L-cysteinylglycine + L-glutamate. It carries out the reaction an N-terminal (5-L-glutamyl)-[peptide] + an alpha-amino acid = 5-L-glutamyl amino acid + an N-terminal L-alpha-aminoacyl-[peptide]. It participates in lipid metabolism; leukotriene D4 biosynthesis. The protein operates within sulfur metabolism; glutathione metabolism. Inhibited by serine-borate. Functionally, cleaves the gamma-glutamyl bond of extracellular glutathione tripeptide (gamma-Glu-Cys-Gly) and certain glutathione conjugates. Hydrolyzes glutathione releasing L-Glu and Cys-Gly dipeptide which is further metabolized to maintain extracellular cysteine levels but also to provide cysteine necessary for intracellular glutathione synthesis. Among glutathione-S-conjugates metabolizes leukotriene C4 (LTC4) and S-geranylgeranyl-glutathione (GGG), but is inactive toward gamma-glutamyl leucine. Converts extracellular LTC4 to LTD4 during acute inflammatory response. Acts as a negative regulator of GGG bioactivity. GGT5 (via GGG catabolism) and ABCC1 (via extracellular transport) establish GGG gradients within lymphoid tissues to position P2RY8-positive lymphocytes at germinal centers in lymphoid follicles and restrict their chemotactic transmigration from blood vessels to bone marrow parenchyma. The transpeptidation reaction, i.e. the transfer of gamma-glutamyl moiety to an acceptor molecule to yield a new gamma-glutamyl compound requires high concentration of dipeptide acceptor and is considered nonphysiological. The chain is Glutathione hydrolase 5 proenzyme (Ggt5) from Rattus norvegicus (Rat).